Here is a 337-residue protein sequence, read N- to C-terminus: Beta-glucosidase-like protein NCA3, mitochondrial (337 aa).

Over residues 57-67 the composition is skewed to low complexity; it reads ESAATTTTLSS. The disordered stretch occupies residues 57–84; the sequence is ESAATTTTLSSSEKDTSEQKRDGGFQDG. A compositionally biased stretch (basic and acidic residues) spans 68 to 80; it reads SEKDTSEQKRDGG.

It belongs to the SUN family.

Its subcellular location is the mitochondrion. Involved in the mitochondrial expression of subunits 6 and 8 of the F0-F1 ATP synthase. The polypeptide is Beta-glucosidase-like protein NCA3, mitochondrial (NCA3) (Saccharomyces cerevisiae (strain ATCC 204508 / S288c) (Baker's yeast)).